The chain runs to 815 residues: Ferripyoverdine receptor (815 aa).

The first 43 residues, 1 to 43, serve as a signal peptide directing secretion; it reads MPAPHGLSPLSKAFLMRRAFQRRILPHSLAMALSLPLAGYVQA. The TBDR plug domain occupies 161-271; it reads TPRETPQSIT…LGATINLIRK (111 aa). Positions 276–815 constitute a TBDR beta-barrel domain; sequence EFKGHVELGA…NLMFSTRWDF (540 aa). The TonB C-terminal box motif lies at 798 to 815; it reads SASYGDPRNLMFSTRWDF.

The protein belongs to the TonB-dependent receptor family.

Its subcellular location is the cell outer membrane. Its function is as follows. Receptor for the siderophore ferripyoverdine. This Pseudomonas aeruginosa (strain ATCC 15692 / DSM 22644 / CIP 104116 / JCM 14847 / LMG 12228 / 1C / PRS 101 / PAO1) protein is Ferripyoverdine receptor (fpvA).